Reading from the N-terminus, the 73-residue chain is Putative sodium channel toxin Ts39 (73 aa).

The N-terminal stretch at 1–22 (MKTLNFCLFLVIISSLTVRVFC) is a signal peptide. The 50-residue stretch at 24 to 73 (NDRFLTVNDNYVICLYINKSFVNCENLCKAYMNAKDGFCRQPHCFCTDVE) folds into the LCN-type CS-alpha/beta domain. Intrachain disulfides connect C37–C62, C47–C67, and C51–C69.

This sequence belongs to the long (3 C-C) scorpion toxin superfamily. Sodium channel inhibitor family. In terms of tissue distribution, expressed by the venom gland.

The protein resides in the secreted. In terms of biological role, putative sodium channel toxin. The protein is Putative sodium channel toxin Ts39 of Tityus serrulatus (Brazilian scorpion).